The primary structure comprises 124 residues: Protein MT1307 (124 aa).

A signal peptide (tat-type signal) is located at residues 1-35; that stretch reads MTTMITLRRRFAVAVAGVATAAATTVTLAPAPANA.

It to M.tuberculosis Rv1813c. Post-translationally, predicted to be exported by the Tat system. The position of the signal peptide cleavage has not been experimentally proven.

The polypeptide is Protein MT1307 (Mycobacterium tuberculosis (strain CDC 1551 / Oshkosh)).